The sequence spans 224 residues: MSEDNFDEEFDGTLPSGPRHPMARRFRGYLPVVVDVETGGFNSATDALLEIAATTVGMDEKGFLFPEHTYFFRIEPFEGANIEPAALEFTGIKLDHPLRMAVQEEQALTEIFRGIRKALKANGCKRAILVGHNSSFDLGFLNAAVARTGIKRNPFHPFSSFDTATLAGLAYGQTVLAKACQAAGMEFDNREAHSARYDTEKTAELFCGIVNRWKEMGGWMDDDD.

Residues 32–206 form the Exonuclease domain; the sequence is VVVDVETGGF…YDTEKTAELF (175 aa). The Mg(2+) site is built by D35, E37, H193, and D198. H193 functions as the Proton donor/acceptor in the catalytic mechanism.

The protein belongs to the RNase T family. As to quaternary structure, homodimer. Mg(2+) serves as cofactor.

In terms of biological role, trims short 3' overhangs of a variety of RNA species, leaving a one or two nucleotide 3' overhang. Responsible for the end-turnover of tRNA: specifically removes the terminal AMP residue from uncharged tRNA (tRNA-C-C-A). Also appears to be involved in tRNA biosynthesis. The chain is Ribonuclease T from Pseudomonas paraeruginosa (strain DSM 24068 / PA7) (Pseudomonas aeruginosa (strain PA7)).